Reading from the N-terminus, the 280-residue chain is Protein synthesis inhibitor II (280 aa).

Residue alanine 1 is modified to N-acetylalanine. Glutamate 174 is an active-site residue.

The protein belongs to the ribosome-inactivating protein family. Type 1 RIP subfamily.

It is found in the cytoplasm. It carries out the reaction Endohydrolysis of the N-glycosidic bond at one specific adenosine on the 28S rRNA.. Its function is as follows. Inhibits the elongation phase of protein synthesis. It inactivates fungal ribosomes even more effectively than mammalian ribosomes and is thought to function as a constitutive antifungal agent in plants. This chain is Protein synthesis inhibitor II (RIP30A), found in Hordeum vulgare (Barley).